The following is a 54-amino-acid chain: Large ribosomal subunit protein bL33 (54 aa).

This sequence belongs to the bacterial ribosomal protein bL33 family.

This Rhodopirellula baltica (strain DSM 10527 / NCIMB 13988 / SH1) protein is Large ribosomal subunit protein bL33.